A 329-amino-acid chain; its full sequence is MIKNILLLCGGGSSEHEISLLSANFVEQQLNLIENVSVTRVEIKNEGWVTNQGELVYLDPNQKKLCSDNLSLDVDFIVPCIHGFPGETGDIQSMFEIAGIPYLGCGPEASSNSFNKITSKLWYDAIGIPNTPYLFLTRNDEQAHEQALQAFDKWGKVFVKAARQGSSVGCYSVTNKQSVSQAVNDAFGYSEQVLVEKSVKPRELEVAAYEMNGELHITKPGEVIAPDGAFYSYDEKYSTSSHSLTEVEAKNLTEEQVEAIRVASETVFKQMNLRHLSRIDFFLTEDGEIYLNEVNTFPGMTPISMFPKMLQNNGHKFHEFLADCINTAI.

The region spanning 120-326 is the ATP-grasp domain; the sequence is KLWYDAIGIP…FHEFLADCIN (207 aa). 150–205 lines the ATP pocket; that stretch reads AFDKWGKVFVKAARQGSSVGCYSVTNKQSVSQAVNDAFGYSEQVLVEKSVKPRELE. Mg(2+) contacts are provided by Asp280, Glu293, and Asn295.

It belongs to the D-alanine--D-alanine ligase family. Requires Mg(2+) as cofactor. It depends on Mn(2+) as a cofactor.

The protein resides in the cytoplasm. It carries out the reaction 2 D-alanine + ATP = D-alanyl-D-alanine + ADP + phosphate + H(+). The protein operates within cell wall biogenesis; peptidoglycan biosynthesis. Functionally, cell wall formation. The protein is D-alanine--D-alanine ligase of Vibrio campbellii (strain ATCC BAA-1116).